We begin with the raw amino-acid sequence, 169 residues long: uncharacterized protein (169 aa).

A helical transmembrane segment spans residues isoleucine 97 to phenylalanine 117. The disordered stretch occupies residues asparagine 137–tyrosine 169. The segment covering proline 160 to tyrosine 169 has biased composition (basic and acidic residues).

Its subcellular location is the membrane. This is an uncharacterized protein from Caenorhabditis elegans.